Here is a 465-residue protein sequence, read N- to C-terminus: Ribulose bisphosphate carboxylase large chain (465 aa).

Position 4 is an N6,N6,N6-trimethyllysine (Lys-4). Substrate is bound by residues Asn-113 and Thr-163. Lys-165 functions as the Proton acceptor in the catalytic mechanism. Lys-167 is a binding site for substrate. 3 residues coordinate Mg(2+): Lys-191, Asp-193, and Glu-194. Position 191 is an N6-carboxylysine (Lys-191). The active-site Proton acceptor is the His-284. Arg-285, His-317, and Ser-369 together coordinate substrate.

The protein belongs to the RuBisCO large chain family. Type I subfamily. Heterohexadecamer of 8 large chains and 8 small chains; disulfide-linked. The disulfide link is formed within the large subunit homodimers. Mg(2+) serves as cofactor. In terms of processing, the disulfide bond which can form in the large chain dimeric partners within the hexadecamer appears to be associated with oxidative stress and protein turnover.

The protein resides in the plastid. It localises to the chloroplast. It carries out the reaction 2 (2R)-3-phosphoglycerate + 2 H(+) = D-ribulose 1,5-bisphosphate + CO2 + H2O. The enzyme catalyses D-ribulose 1,5-bisphosphate + O2 = 2-phosphoglycolate + (2R)-3-phosphoglycerate + 2 H(+). RuBisCO catalyzes two reactions: the carboxylation of D-ribulose 1,5-bisphosphate, the primary event in carbon dioxide fixation, as well as the oxidative fragmentation of the pentose substrate in the photorespiration process. Both reactions occur simultaneously and in competition at the same active site. The protein is Ribulose bisphosphate carboxylase large chain of Ephedra tweediana (Vining horsetail).